We begin with the raw amino-acid sequence, 245 residues long: Ribosomal RNA small subunit methyltransferase J (245 aa).

S-adenosyl-L-methionine is bound by residues 94–95 (RD), 110–111 (ER), and aspartate 164.

The protein belongs to the methyltransferase superfamily. RsmJ family.

The protein resides in the cytoplasm. It carries out the reaction guanosine(1516) in 16S rRNA + S-adenosyl-L-methionine = N(2)-methylguanosine(1516) in 16S rRNA + S-adenosyl-L-homocysteine + H(+). In terms of biological role, specifically methylates the guanosine in position 1516 of 16S rRNA. This chain is Ribosomal RNA small subunit methyltransferase J, found in Dechloromonas aromatica (strain RCB).